The following is a 317-amino-acid chain: Ribosomal RNA small subunit methyltransferase H (317 aa).

S-adenosyl-L-methionine-binding positions include 30-32 (GGH), Asp-50, Tyr-74, Asp-95, and Gln-102.

It belongs to the methyltransferase superfamily. RsmH family.

The protein resides in the cytoplasm. It catalyses the reaction cytidine(1402) in 16S rRNA + S-adenosyl-L-methionine = N(4)-methylcytidine(1402) in 16S rRNA + S-adenosyl-L-homocysteine + H(+). Functionally, specifically methylates the N4 position of cytidine in position 1402 (C1402) of 16S rRNA. The polypeptide is Ribosomal RNA small subunit methyltransferase H (Nitrosomonas europaea (strain ATCC 19718 / CIP 103999 / KCTC 2705 / NBRC 14298)).